Consider the following 364-residue polypeptide: DNA polymerase IV (364 aa).

The 182-residue stretch at 8–189 (IIHIDMDCYF…LPLTKIPGVG (182 aa)) folds into the UmuC domain. Positions 12 and 107 each coordinate Mg(2+). Residue glutamate 108 is part of the active site.

The protein belongs to the DNA polymerase type-Y family. As to quaternary structure, monomer. Mg(2+) is required as a cofactor.

The protein localises to the cytoplasm. The enzyme catalyses DNA(n) + a 2'-deoxyribonucleoside 5'-triphosphate = DNA(n+1) + diphosphate. Its function is as follows. Poorly processive, error-prone DNA polymerase involved in untargeted mutagenesis. Copies undamaged DNA at stalled replication forks, which arise in vivo from mismatched or misaligned primer ends. These misaligned primers can be extended by PolIV. Exhibits no 3'-5' exonuclease (proofreading) activity. May be involved in translesional synthesis, in conjunction with the beta clamp from PolIII. The sequence is that of DNA polymerase IV from Shewanella woodyi (strain ATCC 51908 / MS32).